Here is a 353-residue protein sequence, read N- to C-terminus: UDP-N-acetylglucosamine--N-acetylmuramyl-(pentapeptide) pyrophosphoryl-undecaprenol N-acetylglucosamine transferase (353 aa).

UDP-N-acetyl-alpha-D-glucosamine contacts are provided by residues 10 to 12 (TGG), Asn-124, Ser-183, and Gln-283.

This sequence belongs to the glycosyltransferase 28 family. MurG subfamily.

Its subcellular location is the cell inner membrane. The enzyme catalyses di-trans,octa-cis-undecaprenyl diphospho-N-acetyl-alpha-D-muramoyl-L-alanyl-D-glutamyl-meso-2,6-diaminopimeloyl-D-alanyl-D-alanine + UDP-N-acetyl-alpha-D-glucosamine = di-trans,octa-cis-undecaprenyl diphospho-[N-acetyl-alpha-D-glucosaminyl-(1-&gt;4)]-N-acetyl-alpha-D-muramoyl-L-alanyl-D-glutamyl-meso-2,6-diaminopimeloyl-D-alanyl-D-alanine + UDP + H(+). Its pathway is cell wall biogenesis; peptidoglycan biosynthesis. Cell wall formation. Catalyzes the transfer of a GlcNAc subunit on undecaprenyl-pyrophosphoryl-MurNAc-pentapeptide (lipid intermediate I) to form undecaprenyl-pyrophosphoryl-MurNAc-(pentapeptide)GlcNAc (lipid intermediate II). This Helicobacter pylori (strain Shi470) protein is UDP-N-acetylglucosamine--N-acetylmuramyl-(pentapeptide) pyrophosphoryl-undecaprenol N-acetylglucosamine transferase.